A 153-amino-acid polypeptide reads, in one-letter code: UPF0756 membrane protein BCB4264_A4705 (153 aa).

The next 4 helical transmembrane spans lie at Phe-8–Ile-28, Leu-54–Phe-74, Trp-87–Leu-107, and Leu-117–Ile-137.

This sequence belongs to the UPF0756 family.

It localises to the cell membrane. The chain is UPF0756 membrane protein BCB4264_A4705 from Bacillus cereus (strain B4264).